The chain runs to 79 residues: uncharacterized protein (79 aa).

2 helical membrane passes run Cys28–Ala48 and Val51–Val71.

The protein localises to the cell membrane. This is an uncharacterized protein from Methanocaldococcus jannaschii (strain ATCC 43067 / DSM 2661 / JAL-1 / JCM 10045 / NBRC 100440) (Methanococcus jannaschii).